Consider the following 214-residue polypeptide: Nucleoside triphosphate pyrophosphatase (214 aa).

Catalysis depends on D79, which acts as the Proton acceptor.

Belongs to the Maf family. It depends on a divalent metal cation as a cofactor.

Its subcellular location is the cytoplasm. It carries out the reaction a ribonucleoside 5'-triphosphate + H2O = a ribonucleoside 5'-phosphate + diphosphate + H(+). The enzyme catalyses a 2'-deoxyribonucleoside 5'-triphosphate + H2O = a 2'-deoxyribonucleoside 5'-phosphate + diphosphate + H(+). Nucleoside triphosphate pyrophosphatase. May have a dual role in cell division arrest and in preventing the incorporation of modified nucleotides into cellular nucleic acids. The chain is Nucleoside triphosphate pyrophosphatase from Rhodococcus opacus (strain B4).